We begin with the raw amino-acid sequence, 350 residues long: Guanine nucleotide-binding protein G(t) subunit alpha (350 aa).

The disordered stretch occupies residues 1–21 (MGAGASAEEKHSRELEKKLKE). Gly2 carries the N-myristoyl glycine lipid modification. Basic and acidic residues predominate over residues 7 to 21 (AEEKHSRELEKKLKE). A G-alpha domain is found at 28 to 350 (RTVKLLLLGA…KENLKDCGLF (323 aa)). Residues 31 to 44 (KLLLLGAGESGKST) are G1 motif. GTP is bound by residues 36 to 43 (GAGESGKS), 171 to 177 (LRSRVKT), 196 to 200 (DVGGQ), 265 to 268 (NKKD), and Ala322. Mg(2+)-binding residues include Ser43 and Thr177. A G2 motif region spans residues 169 to 177 (DVLRSRVKT). A G3 motif region spans residues 192 to 201 (FRMFDVGGQR). A G4 motif region spans residues 261 to 268 (VLFLNKKD). The G5 motif stretch occupies residues 320–325 (TCATDT).

Belongs to the G-alpha family. G(i/o/t/z) subfamily. In terms of assembly, g proteins are composed of 3 units; alpha, beta and gamma. The alpha chain contains the guanine nucleotide binding site.

Guanine nucleotide-binding proteins (G proteins) are involved as modulators or transducers in various transmembrane signaling systems. Transducin is an amplifier and one of the transducers of a visual impulse that performs the coupling between rhodopsin and cGMP-phosphodiesterase. This chain is Guanine nucleotide-binding protein G(t) subunit alpha (gnat), found in Xenopus laevis (African clawed frog).